The primary structure comprises 321 residues: Lipoyl synthase (321 aa).

The [4Fe-4S] cluster site is built by C68, C73, C79, C94, C98, C101, and S308. The region spanning 80–297 (FNHGTATFMI…KAEALAMGFT (218 aa)) is the Radical SAM core domain.

The protein belongs to the radical SAM superfamily. Lipoyl synthase family. [4Fe-4S] cluster serves as cofactor.

It is found in the cytoplasm. The catalysed reaction is [[Fe-S] cluster scaffold protein carrying a second [4Fe-4S](2+) cluster] + N(6)-octanoyl-L-lysyl-[protein] + 2 oxidized [2Fe-2S]-[ferredoxin] + 2 S-adenosyl-L-methionine + 4 H(+) = [[Fe-S] cluster scaffold protein] + N(6)-[(R)-dihydrolipoyl]-L-lysyl-[protein] + 4 Fe(3+) + 2 hydrogen sulfide + 2 5'-deoxyadenosine + 2 L-methionine + 2 reduced [2Fe-2S]-[ferredoxin]. Its pathway is protein modification; protein lipoylation via endogenous pathway; protein N(6)-(lipoyl)lysine from octanoyl-[acyl-carrier-protein]: step 2/2. Functionally, catalyzes the radical-mediated insertion of two sulfur atoms into the C-6 and C-8 positions of the octanoyl moiety bound to the lipoyl domains of lipoate-dependent enzymes, thereby converting the octanoylated domains into lipoylated derivatives. In Edwardsiella ictaluri (strain 93-146), this protein is Lipoyl synthase.